Here is a 504-residue protein sequence, read N- to C-terminus: Glycerol kinase (504 aa).

Thr14 provides a ligand contact to ADP. ATP contacts are provided by Thr14, Thr15, and Ser16. Thr14 contributes to the sn-glycerol 3-phosphate binding site. Arg18 serves as a coordination point for ADP. Positions 84, 85, 136, and 246 each coordinate sn-glycerol 3-phosphate. Residues Arg84, Glu85, Tyr136, Asp246, and Gln247 each contribute to the glycerol site. Residues Thr268 and Gly311 each contribute to the ADP site. Thr268, Gly311, Gln315, and Gly412 together coordinate ATP. 2 residues coordinate ADP: Gly412 and Asn416.

The protein belongs to the FGGY kinase family.

The enzyme catalyses glycerol + ATP = sn-glycerol 3-phosphate + ADP + H(+). It participates in polyol metabolism; glycerol degradation via glycerol kinase pathway; sn-glycerol 3-phosphate from glycerol: step 1/1. Inhibited by fructose 1,6-bisphosphate (FBP). Its function is as follows. Key enzyme in the regulation of glycerol uptake and metabolism. Catalyzes the phosphorylation of glycerol to yield sn-glycerol 3-phosphate. The chain is Glycerol kinase from Aliivibrio fischeri (strain ATCC 700601 / ES114) (Vibrio fischeri).